The sequence spans 346 residues: Transposase for insertion sequence element IS1533 (346 aa).

This sequence belongs to the transposase IS1111A/IS1328/IS1533 family.

Its function is as follows. Required for the transposition of the insertion element. In Leptospira borgpetersenii, this protein is Transposase for insertion sequence element IS1533 (tnhA).